Reading from the N-terminus, the 843-residue chain is Protein P (843 aa).

Residues 1 to 177 (MPLSYQHFRK…FCGSPYSWEQ (177 aa)) form a terminal protein domain (TP) region. Positions 178 to 346 (DLQHGRLVFQ…YCLSHIVNLI (169 aa)) are spacer. 2 disordered regions span residues 219–249 (RKSRLGPQPTQGQLAGRPQGGSGSIRARIHP) and 290–316 (STSKGHSSSGHAVELHHFPPNSSRSQS). The segment covering 290–299 (STSKGHSSSG) has biased composition (polar residues). The tract at residues 347 to 690 (EDWGPCAEHG…YMTLYPVARQ (344 aa)) is polymerase/reverse transcriptase domain (RT). Residues 357 to 600 (EHRIRTPRTP…YSLNFMGYVI (244 aa)) enclose the Reverse transcriptase domain. The Mg(2+) site is built by Asp429, Asp551, and Asp552.

This sequence belongs to the hepadnaviridae P protein family.

It catalyses the reaction DNA(n) + a 2'-deoxyribonucleoside 5'-triphosphate = DNA(n+1) + diphosphate. It carries out the reaction Endonucleolytic cleavage to 5'-phosphomonoester.. Activated by host HSP70 and HSP40 in vitro to be able to bind the epsilon loop of the pgRNA. Because deletion of the RNase H region renders the protein partly chaperone-independent, the chaperones may be needed indirectly to relieve occlusion of the RNA-binding site by this domain. Inhibited by several reverse-transcriptase inhibitors: Lamivudine, Adefovir and Entecavir. Multifunctional enzyme that converts the viral RNA genome into dsDNA in viral cytoplasmic capsids. This enzyme displays a DNA polymerase activity that can copy either DNA or RNA templates, and a ribonuclease H (RNase H) activity that cleaves the RNA strand of RNA-DNA heteroduplexes in a partially processive 3'- to 5'-endonucleasic mode. Neo-synthesized pregenomic RNA (pgRNA) are encapsidated together with the P protein, and reverse-transcribed inside the nucleocapsid. Initiation of reverse-transcription occurs first by binding the epsilon loop on the pgRNA genome, and is initiated by protein priming, thereby the 5'-end of (-)DNA is covalently linked to P protein. Partial (+)DNA is synthesized from the (-)DNA template and generates the relaxed circular DNA (RC-DNA) genome. After budding and infection, the RC-DNA migrates in the nucleus, and is converted into a plasmid-like covalently closed circular DNA (cccDNA). The activity of P protein does not seem to be necessary for cccDNA generation, and is presumably released from (+)DNA by host nuclear DNA repair machinery. The sequence is that of Protein P from Homo sapiens (Human).